Reading from the N-terminus, the 99-residue chain is Plastocyanin (99 aa).

A Plastocyanin-like domain is found at 1–99; it reads VEVLMGGSGG…IGMSGIVTVN (99 aa). Positions 37, 84, 87, and 92 each coordinate Cu cation.

It belongs to the plastocyanin family. It depends on Cu(2+) as a cofactor.

It is found in the plastid. The protein localises to the chloroplast thylakoid membrane. Functionally, participates in electron transfer between P700 and the cytochrome b6-f complex in photosystem I. The chain is Plastocyanin (PETE) from Ginkgo biloba (Ginkgo).